Here is a 214-residue protein sequence, read N- to C-terminus: MQEFLATSERRAELYWWFATLFSAELSDKQIAEYDSYDVRSFLKSLSTLDPMRPAVTELNEAIARLLVRDERATALAADFKGLFLADTAVQPYESAHLDASSLGRMQQRLVRLAIDVSAKYPQPVDHLGVELDLMGNLIIRAAEAPSADQREQWLGEQEAVLHGHLLAWFPHFEVACRAADPFGFYGASARLLGVFLTMDANYLSLVKPASSAD.

The protein belongs to the TorD/DmsD family. TorD subfamily.

It is found in the cytoplasm. Functionally, involved in the biogenesis of TorA. Acts on TorA before the insertion of the molybdenum cofactor and, as a result, probably favors a conformation of the apoenzyme that is competent for acquiring the cofactor. This chain is Chaperone protein TorD, found in Aeromonas salmonicida (strain A449).